The following is a 718-amino-acid chain: Ribosomal RNA large subunit methyltransferase K/L (718 aa).

Positions 43–154 (TQYRILLWSR…QDELVVSLDL (112 aa)) constitute a THUMP domain.

It belongs to the methyltransferase superfamily. RlmKL family.

The protein resides in the cytoplasm. The catalysed reaction is guanosine(2445) in 23S rRNA + S-adenosyl-L-methionine = N(2)-methylguanosine(2445) in 23S rRNA + S-adenosyl-L-homocysteine + H(+). The enzyme catalyses guanosine(2069) in 23S rRNA + S-adenosyl-L-methionine = N(2)-methylguanosine(2069) in 23S rRNA + S-adenosyl-L-homocysteine + H(+). Its function is as follows. Specifically methylates the guanine in position 2445 (m2G2445) and the guanine in position 2069 (m7G2069) of 23S rRNA. The sequence is that of Ribosomal RNA large subunit methyltransferase K/L from Histophilus somni (strain 129Pt) (Haemophilus somnus).